The following is a 938-amino-acid chain: Protocadherin gamma-C4 (938 aa).

The N-terminal stretch at 1–29 (MLRKVRSWTEIWRWATLLFLFYHLGYVCG) is a signal peptide. Cadherin domains are found at residues 30 to 133 (QIRY…APRF), 134 to 242 (PRQQ…APAF), 243 to 350 (QQSS…APYI), 351 to 455 (TVTS…PPSF), 456 to 565 (FQRS…APAV), and 572 to 676 (PGSL…VPDL). Residues 30–692 (QIRYPVPEES…REGESRLTLY (663 aa)) are Extracellular-facing. Residues N265, N276, and N444 are each glycosylated (N-linked (GlcNAc...) asparagine). Residues 693-713 (LAVSLVAICFVSFGSFVALLS) traverse the membrane as a helical segment. Topologically, residues 714-938 (KCLRGAACGV…KKKSGKKEKK (225 aa)) are cytoplasmic. 2 disordered regions span residues 791-847 (PSAP…WPNN) and 908-938 (ATLTNAAGKRDGKAPAGGNGNKKKSGKKEKK). Residues 822–847 (WRFSQAQRPGTSGSQNGDDTGTWPNN) show a composition bias toward polar residues. Residues 928 to 938 (NKKKSGKKEKK) are compositionally biased toward basic residues.

The protein resides in the cell membrane. In terms of biological role, potential calcium-dependent cell-adhesion protein. May be involved in the establishment and maintenance of specific neuronal connections in the brain. The polypeptide is Protocadherin gamma-C4 (PCDHGC4) (Homo sapiens (Human)).